The sequence spans 599 residues: NADH-quinone oxidoreductase subunit C/D (599 aa).

The interval 1–189 is NADH dehydrogenase I subunit C; the sequence is MTDLTTHDLA…DPFELTKQKE (189 aa). Residues 213-599 are NADH dehydrogenase I subunit D; the sequence is DFMFLNLGPN…IDFVMSDVDR (387 aa).

This sequence in the N-terminal section; belongs to the complex I 30 kDa subunit family. In the C-terminal section; belongs to the complex I 49 kDa subunit family. As to quaternary structure, NDH-1 is composed of 13 different subunits. Subunits NuoB, CD, E, F, and G constitute the peripheral sector of the complex.

The protein resides in the cell inner membrane. It catalyses the reaction a quinone + NADH + 5 H(+)(in) = a quinol + NAD(+) + 4 H(+)(out). NDH-1 shuttles electrons from NADH, via FMN and iron-sulfur (Fe-S) centers, to quinones in the respiratory chain. The immediate electron acceptor for the enzyme in this species is believed to be ubiquinone. Couples the redox reaction to proton translocation (for every two electrons transferred, four hydrogen ions are translocated across the cytoplasmic membrane), and thus conserves the redox energy in a proton gradient. The protein is NADH-quinone oxidoreductase subunit C/D of Pectobacterium atrosepticum (strain SCRI 1043 / ATCC BAA-672) (Erwinia carotovora subsp. atroseptica).